Here is a 360-residue protein sequence, read N- to C-terminus: Hyaluronan and proteoglycan link protein 3 (360 aa).

Residues 1–17 form the signal peptide; it reads MGLLLLVPLLLLPGSYG. Positions 48–164 constitute an Ig-like V-type domain; that stretch reads KLVVETPEET…ESGLVELELR (117 aa). Intrachain disulfides connect cysteine 70-cysteine 146, cysteine 188-cysteine 259, cysteine 212-cysteine 233, cysteine 286-cysteine 356, and cysteine 311-cysteine 332. 2 Link domains span residues 166 to 261 and 266 to 358; these read VVFP…FCFA and GRVY…YCYR.

The protein belongs to the HAPLN family. As to expression, widely expressed with highest levels in spleen and placenta.

The protein localises to the secreted. It localises to the extracellular space. The protein resides in the extracellular matrix. Functionally, may function in hyaluronic acid binding. The chain is Hyaluronan and proteoglycan link protein 3 (HAPLN3) from Homo sapiens (Human).